A 181-amino-acid polypeptide reads, in one-letter code: Translationally-controlled tumor protein homolog (181 aa).

The TCTP domain maps to M1 to Q181.

It belongs to the TCTP family.

Its subcellular location is the cytoplasm. Its function is as follows. Involved in calcium binding and microtubule stabilization. The polypeptide is Translationally-controlled tumor protein homolog (Wuchereria bancrofti).